Reading from the N-terminus, the 298-residue chain is Glyoxalase domain-containing protein 4 (298 aa).

The region spanning 5–130 is the VOC 1 domain; that stretch reads RALHFVFKVG…GGYKFYLQDR (126 aa). The residue at position 109 (lysine 109) is an N6-succinyllysine. The residue at position 131 (serine 131) is a Phosphoserine. In terms of domain architecture, VOC 2 spans 137-258; sequence PVLKVTLAVS…DGHEICFVGD (122 aa). N6-succinyllysine is present on lysine 273.

Belongs to the glyoxalase I family. As to quaternary structure, interacts with NUDT9.

Its subcellular location is the mitochondrion. This is Glyoxalase domain-containing protein 4 (Glod4) from Rattus norvegicus (Rat).